The sequence spans 185 residues: Ribosome-recycling factor (185 aa).

Belongs to the RRF family.

It localises to the cytoplasm. In terms of biological role, responsible for the release of ribosomes from messenger RNA at the termination of protein biosynthesis. May increase the efficiency of translation by recycling ribosomes from one round of translation to another. The chain is Ribosome-recycling factor from Streptococcus uberis (strain ATCC BAA-854 / 0140J).